Reading from the N-terminus, the 694-residue chain is U-box domain-containing protein 1 (694 aa).

Positions 292 to 366 constitute a U-box domain; the sequence is NIPDEFRCPI…HQWCYENNVK (75 aa). ARM repeat units follow at residues 392–432, 435–474, 476–516, 519–558, 560–599, 601–641, and 646–685; these read SENK…LLAK, MDNRRIIAEVGAIPFLVTLLVSKDSRIQEHVVTALFNLSI, DNNK…SLSM, DCKVQIGASSRAIPALVGLLKEGTIIGKRDAATALFNLAV, NPNKLSIVKSGAVTLLVELLMDDKAGITDDSLAVLAVLLG, SEGL…GLCK, and LVAMRLLANPRSIPSLQSLAADGSLRARRKADALLRLLNR.

In terms of assembly, interacts with LYK3. Binds to NORK/DMI2. Phosphorylated by LYK3 in vitro. Phosphorylated by NORK/DMI2. Present ubiquitously at very low levels during nonsymbiotic growth. Accumulates in roots and nodules during symbiotic growth with rhizobia and mycorrhiza.

The protein localises to the cell membrane. It catalyses the reaction S-ubiquitinyl-[E2 ubiquitin-conjugating enzyme]-L-cysteine + [acceptor protein]-L-lysine = [E2 ubiquitin-conjugating enzyme]-L-cysteine + N(6)-ubiquitinyl-[acceptor protein]-L-lysine.. It participates in protein modification; protein ubiquitination. Exhibits U-box-dependent E3 ubiquitin ligase activity in vitro. Negatively modulates successive stages of infection and development of rhizobial (e.g. Sinorhizobium meliloti) and arbuscular mycorrhizal fungi (AM, e.g. Rhizophagus irregularis) symbioses, in an ubiquitin ligase activity-dependent manner. Negative regulator of the LYK3 signaling pathway leading to nitrogen-fixing symbiosis (e.g. infection and nodulation) by rhizobia. May be involved in the discrimination of rhizobium strains producing variant Nod factors. The chain is U-box domain-containing protein 1 from Medicago truncatula (Barrel medic).